Reading from the N-terminus, the 243-residue chain is Probable sentrin-specific protease 8 (243 aa).

Residues 12–185 (SAIYQSDINI…LYVLSIIEEL (174 aa)) are protease. Active-site residues include H109 and D126. C174 serves as the catalytic Nucleophile.

It belongs to the peptidase C48 family.

In terms of biological role, protease that catalyzes two essential functions in the nedd8 pathway: processing of full-length nedd8 to its mature form and deconjugation of nedd8 from targeted proteins. This Dictyostelium discoideum (Social amoeba) protein is Probable sentrin-specific protease 8 (senp8).